The following is a 503-amino-acid chain: Beta-amylase Tri a 17 (503 aa).

Residues Asp-51, His-91, and Asp-99 each contribute to the substrate site. The Proton donor role is filled by Glu-184. Substrate contacts are provided by Lys-293, His-298, and Thr-340. The Proton acceptor role is filled by Glu-378. Substrate is bound by residues 379-380 (NA) and Arg-418.

This sequence belongs to the glycosyl hydrolase 14 family.

It carries out the reaction Hydrolysis of (1-&gt;4)-alpha-D-glucosidic linkages in polysaccharides so as to remove successive maltose units from the non-reducing ends of the chains.. The chain is Beta-amylase Tri a 17 (BMY1) from Triticum aestivum (Wheat).